Reading from the N-terminus, the 505-residue chain is Lysine--tRNA ligase (505 aa).

Residues E415 and E422 each coordinate Mg(2+).

This sequence belongs to the class-II aminoacyl-tRNA synthetase family. As to quaternary structure, homodimer. Mg(2+) serves as cofactor.

It localises to the cytoplasm. It carries out the reaction tRNA(Lys) + L-lysine + ATP = L-lysyl-tRNA(Lys) + AMP + diphosphate. The polypeptide is Lysine--tRNA ligase (lysS) (Escherichia coli (strain K12)).